Here is a 159-residue protein sequence, read N- to C-terminus: MSEEGSPMYSPFFGVMGAASAMVFSALGAAYGTAKSGVGISAMSVMRPELIMKCIIPVVMAGIIAIYGLVVAVLIAGKLDEAPTYTLYQGFVHMGAGLSVGLSGLAAGFAIGIVGDAGVRGTAQQPRLYVGMILILIFAEVLGLYGLIVAIFLYTKTSS.

At 1 to 11 (MSEEGSPMYSP) the chain is on the lumenal side. Residues 12-32 (FFGVMGAASAMVFSALGAAYG) traverse the membrane as a helical segment. The Cytoplasmic segment spans residues 33–54 (TAKSGVGISAMSVMRPELIMKC). A helical transmembrane segment spans residues 55 to 75 (IIPVVMAGIIAIYGLVVAVLI). The Lumenal segment spans residues 76-93 (AGKLDEAPTYTLYQGFVH). The chain crosses the membrane as a helical span at residues 94 to 114 (MGAGLSVGLSGLAAGFAIGIV). Topologically, residues 115 to 132 (GDAGVRGTAQQPRLYVGM) are cytoplasmic. The helical transmembrane segment at 133–153 (ILILIFAEVLGLYGLIVAIFL) threads the bilayer. The Lumenal segment spans residues 154-159 (YTKTSS).

The protein belongs to the V-ATPase proteolipid subunit family. In terms of assembly, V-ATPase is a heteromultimeric enzyme made up of two complexes: the ATP-hydrolytic V1 complex and the proton translocation V0 complex. The V1 complex consists of three catalytic AB heterodimers that form a heterohexamer, three peripheral stalks each consisting of EG heterodimers, one central rotor including subunits D and F, and the regulatory subunits C and H. The proton translocation complex V0 consists of the proton transport subunit a, a ring of proteolipid subunits c9c'', rotary subunit d, subunits e and f, and two accessory subunits.

Its subcellular location is the vacuole membrane. Proton-conducting pore forming subunit of the V0 complex of vacuolar(H+)-ATPase (V-ATPase), a multisubunit enzyme composed of a peripheral complex (V1) that hydrolyzes ATP and a membrane integral complex (V0) that translocates protons. V-ATPase is responsible for acidifying and maintaining the pH of intracellular compartments and in some cell types, is targeted to the plasma membrane, where it is responsible for acidifying the extracellular environment. In Nephrops norvegicus (Norway lobster), this protein is V-type proton ATPase 16 kDa proteolipid subunit c.